The primary structure comprises 339 residues: tRNA N6-adenosine threonylcarbamoyltransferase (339 aa).

His-114 and His-118 together coordinate Fe cation. Substrate is bound by residues 137–141 (VVSGG), Asp-170, Gly-183, Asp-187, and Asn-277. Asp-305 serves as a coordination point for Fe cation.

It belongs to the KAE1 / TsaD family. It depends on Fe(2+) as a cofactor.

It is found in the cytoplasm. It catalyses the reaction L-threonylcarbamoyladenylate + adenosine(37) in tRNA = N(6)-L-threonylcarbamoyladenosine(37) in tRNA + AMP + H(+). In terms of biological role, required for the formation of a threonylcarbamoyl group on adenosine at position 37 (t(6)A37) in tRNAs that read codons beginning with adenine. Is involved in the transfer of the threonylcarbamoyl moiety of threonylcarbamoyl-AMP (TC-AMP) to the N6 group of A37, together with TsaE and TsaB. TsaD likely plays a direct catalytic role in this reaction. The protein is tRNA N6-adenosine threonylcarbamoyltransferase of Clostridium perfringens (strain ATCC 13124 / DSM 756 / JCM 1290 / NCIMB 6125 / NCTC 8237 / Type A).